Reading from the N-terminus, the 398-residue chain is Substance-K receptor (398 aa).

Topologically, residues 1 to 32 are extracellular; sequence MGTCDIVTEANISSGPESNTTGITAFSMPSWQ. Residues Asn-11 and Asn-19 are each glycosylated (N-linked (GlcNAc...) asparagine). Residues 33–56 traverse the membrane as a helical segment; that stretch reads LALWATAYLALVLVAVTGNAIVIW. Residues 57–69 lie on the Cytoplasmic side of the membrane; the sequence is IILAHRRMRTVTN. Residues 70 to 90 form a helical membrane-spanning segment; that stretch reads YFIVNLALADLCMAAFNAAFN. Topologically, residues 91 to 107 are extracellular; the sequence is FVYASHNIWYFGRAFCY. The cysteines at positions 106 and 181 are disulfide-linked. The helical transmembrane segment at 108 to 129 threads the bilayer; sequence FQNLFPITAMFVSIYSMTAIAA. The Cytoplasmic portion of the chain corresponds to 130-149; that stretch reads DRYMAIVHPFQPRLSAPSTK. Residues 150–170 form a helical membrane-spanning segment; that stretch reads AVIAGIWLVALALASPQCFYS. Topologically, residues 171–196 are extracellular; the sequence is TVTMDQGATKCVVAWPEDSGGKTLLL. The helical transmembrane segment at 197-218 threads the bilayer; the sequence is YHLVVIALIYFLPLAVMFVAYS. Residues 219–251 lie on the Cytoplasmic side of the membrane; the sequence is VIGLTLWRRAVPGHQAHGANLRHLQAMKKFVKT. Residues 252-272 traverse the membrane as a helical segment; the sequence is MVLVVLTFAICWLPYHLYFIL. At 273-290 the chain is on the extracellular side; that stretch reads GSFQEDIYCHKFIQQVYL. Residues 291–310 form a helical membrane-spanning segment; sequence ALFWLAMSSTMYNPIIYCCL. The Cytoplasmic segment spans residues 311 to 398; it reads NHRFRSGFRL…LAPTKTHVEI (88 aa). Cys-324 carries S-palmitoyl cysteine lipidation.

The protein belongs to the G-protein coupled receptor 1 family.

It is found in the cell membrane. In terms of biological role, this is a receptor for the tachykinin neuropeptide substance K (neurokinin A). It is associated with G proteins that activate a phosphatidylinositol-calcium second messenger system. The rank order of affinity of this receptor to tachykinins is: substance K &gt; neuromedin-K &gt; substance P. This Homo sapiens (Human) protein is Substance-K receptor (TACR2).